Here is a 152-residue protein sequence, read N- to C-terminus: TRAPP-associated protein TCA17 (152 aa).

This sequence belongs to the TRAPP small subunits family. Sedlin subfamily. In terms of assembly, interacts with the TRAPP II complex; TRAPP II subunits TRS33 and TRS65 are required for this interaction.

It is found in the golgi apparatus. Its subcellular location is the trans-Golgi network. Required, together with the TRAPP II subunit TRS33, for TRAPP II complex assembly or stability, and for proper Golgi localization of TRAPP and the Rab GTPase YPT31. This Saccharomyces cerevisiae (strain ATCC 204508 / S288c) (Baker's yeast) protein is TRAPP-associated protein TCA17 (TCA17).